Reading from the N-terminus, the 496-residue chain is MTTFFTSVPPWIQDAKQEEEVGWKLVPRPRGREAESQVKCQCEISGTPFSNGEKLRPHSLPQPEQRPYSCPQLHCGKAFASKYKLYRHMATHSAQKPHQCMYCDKMFHRKDHLRNHLQTHDPNKEALHCSECGKNYNTKLGYRRHLAMHAASSGDLSCKVCLQTFESTQALLEHLKAHSRRVAGGAKEKKHPCDHCDRRFYTRKDVRRHLVVHTGRKDFLCQYCAQRFGRKDHLTRHVKKSHSQELLKIKTEPVDMLGLLSCSSTVSVKEELSPVLCMASRDVMGTKAFPGMLPMGMYGAHIPTMPSTGVPHSLVHNTLPMGMSYPLESSPISSPAQLPPKYQLGSTSYLPDKLPKVEVDSFLAELPGSLSLSSAEPQPASPQPAAAAALLDEALLAKSPANLSEALCAANVDFSHLLGFLPLNLPPCNPPGATGGLVMGYSQAEAQPLLTTLQAQPQDSPGAGGPLNFGPLHSLPPVFTSGLSSTTLPRFHQAFQ.

6 C2H2-type zinc fingers span residues 68 to 92 (YSCPQLHCGKAFASKYKLYRHMATH), 98 to 120 (HQCMYCDKMFHRKDHLRNHLQTH), 127 to 149 (LHCSECGKNYNTKLGYRRHLAMH), 156 to 178 (LSCKVCLQTFESTQALLEHLKAH), 191 to 213 (HPCDHCDRRFYTRKDVRRHLVVH), and 219 to 242 (FLCQYCAQRFGRKDHLTRHVKKSH).

The protein belongs to the krueppel C2H2-type zinc-finger protein family.

It is found in the nucleus. In terms of biological role, shows weak transcriptional activatory activity. The chain is Zinc finger protein PLAGL2 (PLAGL2) from Homo sapiens (Human).